We begin with the raw amino-acid sequence, 215 residues long: NADH-quinone oxidoreductase subunit C (215 aa).

It belongs to the complex I 30 kDa subunit family. In terms of assembly, NDH-1 is composed of 14 different subunits. Subunits NuoB, C, D, E, F, and G constitute the peripheral sector of the complex.

The protein resides in the cell inner membrane. The enzyme catalyses a quinone + NADH + 5 H(+)(in) = a quinol + NAD(+) + 4 H(+)(out). Its function is as follows. NDH-1 shuttles electrons from NADH, via FMN and iron-sulfur (Fe-S) centers, to quinones in the respiratory chain. The immediate electron acceptor for the enzyme in this species is believed to be ubiquinone. Couples the redox reaction to proton translocation (for every two electrons transferred, four hydrogen ions are translocated across the cytoplasmic membrane), and thus conserves the redox energy in a proton gradient. The chain is NADH-quinone oxidoreductase subunit C from Methylobacterium sp. (strain 4-46).